Consider the following 254-residue polypeptide: Ciliary microtubule associated protein 1A (254 aa).

STPGR repeat units follow at residues 180 to 205 (PGPAAYRQTDVRVTKFKAPQYTMAAR) and 216 to 241 (PGPGAHSPEKVTLTKPCAPVVTFGIK). Positions 207-226 (EPPGDKTLKPGPGAHSPEKV) are disordered.

Belongs to the CIMAP family. As to quaternary structure, microtubule inner protein component of sperm flagellar doublet microtubules. Testis-specific.

It is found in the cytoplasm. The protein resides in the cytoskeleton. It localises to the flagellum axoneme. Functionally, outer dense fibers are filamentous structures located on the outside of the axoneme in the midpiece and principal piece of the mammalian sperm tail. May help to maintain the passive elastic structures and elastic recoil of the sperm tail. The polypeptide is Ciliary microtubule associated protein 1A (Homo sapiens (Human)).